The sequence spans 1255 residues: TBC1 domain family member 1 (1255 aa).

Ser146 is subject to Phosphoserine. The tract at residues 208 to 228 is disordered; the sequence is RTDWEAPTGQPSAPGPRPMRK. Ser229 carries the post-translational modification Phosphoserine; by PKB/AKT1. Ser231 bears the Phosphoserine; by AMPK mark. Residues 238 to 398 form the PID domain; the sequence is LAFRKEFQDA…LHKLCERIEG (161 aa). At Ser489 the chain carries Phosphoserine; by PKB/AKT1. The residue at position 497 (Ser497) is a Phosphoserine. A Phosphothreonine; by PKB/AKT1 modification is found at Thr499. Phosphoserine occurs at positions 501, 519, 521, 559, 560, 564, 565, and 579. Disordered regions lie at residues 509 to 544 and 559 to 581; these read GNKA…MGDK and SSDD…LSPQ. Low complexity predominate over residues 519–539; that stretch reads SASVDLDSSTSSTLSNTSKEL. A Phosphothreonine modification is found at Thr590. 2 disordered regions span residues 595–614 and 621–681; these read PVEC…VSQR and SVST…GNAV. Residue Ser608 is modified to Phosphoserine. Ser621 is modified (phosphoserine; by PKB/AKT1). Phosphoserine is present on residues Ser660 and Ser661. The segment covering 670–679 has biased composition (polar residues); it reads HNSSGEQSGN. Ser697 carries the phosphoserine; by PKB/AKT1 modification. Phosphoserine occurs at positions 698 and 699. Ser700 carries the phosphoserine; by AMPK modification. Residues 764 to 786 form a disordered region; it reads DSPSRYEDYSELGELPPRSPLEP. 2 positions are modified to phosphoserine: Ser782 and Ser1028. Residues 887–1081 enclose the Rab-GAP TBC domain; the sequence is GVPRHHRGEI…RVFDMIFLQG (195 aa). Phosphotyrosine is present on Tyr1039. Thr1218 carries the post-translational modification Phosphothreonine. Positions 1233–1255 are disordered; sequence LRRQSARPSTPEPDCTQLEPTGD.

In terms of assembly, interacts with APPL2 (via BAR domain); interaction is dependent of TBC1D1 phosphorylation at Ser-229; interaction diminishes the phosphorylation of TBC1D1 at Thr-590, resulting in inhibition of SLC2A4/GLUT4 translocation and glucose uptake. Insulin-stimulated phosphorylation by AKT family kinases stimulates SLC2A4/GLUT4 translocation. Expressed in highest levels in hematopoietic cells, testis and kidney.

It localises to the nucleus. Its function is as follows. May act as a GTPase-activating protein for Rab family protein(s). May play a role in the cell cycle and differentiation of various tissues. Involved in the trafficking and translocation of GLUT4-containing vesicles and insulin-stimulated glucose uptake into cells. This is TBC1 domain family member 1 (Tbc1d1) from Mus musculus (Mouse).